The primary structure comprises 234 residues: uncharacterized protein (234 aa).

The interval 65-89 is disordered; that stretch reads QNANRQEGRRRGLRPSSDGNLRREN. The RING-type zinc finger occupies 185–220; that stretch reads CAVCLHNKVCVLFQKCKHVITCGPCSLRIKECPVCK.

The protein belongs to the IIV-6 175R/332L family.

This is an uncharacterized protein from Acheta domesticus (House cricket).